The sequence spans 594 residues: UvrABC system protein C (594 aa).

Residues 13–99 (NSSGVYQYFD…IKQLKPKYNI (87 aa)) enclose the GIY-YIG domain. A UVR domain is found at 205-240 (DRLIKELELKMERLSNNLRFEEALIYRDRIAKIQKI).

Belongs to the UvrC family. Interacts with UvrB in an incision complex.

Its subcellular location is the cytoplasm. The UvrABC repair system catalyzes the recognition and processing of DNA lesions. UvrC both incises the 5' and 3' sides of the lesion. The N-terminal half is responsible for the 3' incision and the C-terminal half is responsible for the 5' incision. The sequence is that of UvrABC system protein C from Helicobacter pylori (strain ATCC 700392 / 26695) (Campylobacter pylori).